A 420-amino-acid chain; its full sequence is Tyrosine--tRNA ligase (420 aa).

Tyr38 is a binding site for L-tyrosine. The 'HIGH' region motif lies at 43–52 (PTGDSLHIGH). L-tyrosine-binding residues include Tyr169 and Gln173. The short motif at 231–235 (KFGKS) is the 'KMSKS' region element. Residue Lys234 coordinates ATP. The 67-residue stretch at 353–419 (KNIVEFLVET…GKRKYTLVKI (67 aa)) folds into the S4 RNA-binding domain.

It belongs to the class-I aminoacyl-tRNA synthetase family. TyrS type 1 subfamily. In terms of assembly, homodimer.

It localises to the cytoplasm. It catalyses the reaction tRNA(Tyr) + L-tyrosine + ATP = L-tyrosyl-tRNA(Tyr) + AMP + diphosphate + H(+). Catalyzes the attachment of tyrosine to tRNA(Tyr) in a two-step reaction: tyrosine is first activated by ATP to form Tyr-AMP and then transferred to the acceptor end of tRNA(Tyr). In Lactobacillus johnsonii (strain CNCM I-12250 / La1 / NCC 533), this protein is Tyrosine--tRNA ligase.